A 132-amino-acid polypeptide reads, in one-letter code: MSRKRTSPNRNVQIADQIQRDLSELIMREVKDPRIGIVTIQSVELTPDYAHAKVYFTALTGDPEKTQEALNHASGHLHNLLFKRLHIHTVPTLHFHYDQTIEKAVEMSRLIKEANSTRAKDDDEAGAPAQDD.

It belongs to the RbfA family. In terms of assembly, monomer. Binds 30S ribosomal subunits, but not 50S ribosomal subunits or 70S ribosomes.

Its subcellular location is the cytoplasm. Functionally, one of several proteins that assist in the late maturation steps of the functional core of the 30S ribosomal subunit. Associates with free 30S ribosomal subunits (but not with 30S subunits that are part of 70S ribosomes or polysomes). Required for efficient processing of 16S rRNA. May interact with the 5'-terminal helix region of 16S rRNA. In Burkholderia vietnamiensis (strain G4 / LMG 22486) (Burkholderia cepacia (strain R1808)), this protein is Ribosome-binding factor A.